The chain runs to 1456 residues: MVPTILLSALLLHFTDVVAAEPRYILWVSSVVQRFSSEKACLHLLNLNESVSLSVTLEYDGSSTTIFDQPVDEGNFYACADFKVSQMSSEQLAFVALLVQGNTLKISERRSVAIAAEENATFVQTDTPVHKPGDTVHFRVVTLNIWLKPVDDLYPLITVQDPQSNVIFQWINVTTFRNITQLSFQLTPEPILGDYTIVIKTQSGTTVMDHFTVNRDVLPKFEVELTAPETITIADSQFQMVTCAKYTYGQPVQGKAQIKVCRELFSPAHCESNENEICEQFTVQLKDGCASHIINTKVFQLDRSGLFMTLNVNEVVTESGTGVQMSKTHSVFITSVLGTVSFENMDPFYRRGITYFGTLKFSGPNNTPLVDKLLQLELDGKPVGNYTTDENGEARFSINTSEIFGAQISLKAVYVRPRSCHRSSWLSPEYLDAYFSASRFYSQTSSFTKIILEPKQLPCDQEKMFSVLYSLNPEAYKEASDVTFFYLVMVRGGISRSGQKQVRVQAWNGNFSFPISINADLAPSADLFVYTLHPSGEIVADNVRLQIEKCFKNKVSINFSRDKDLPGSNTSVHLQAAPDSFCALRAVDKSALLLNHGQEMTPESVYFTLPYIHQYGYFYNGLNLDDQQAEPCIPQKDLFYNGLYYTPTGNIWDGDLSNLLSNMGLKIFTNLHYRKPEVCSSQENQPLLRTFDHPNERIMMYGGGAPPSSAFHDSVDSISHAKVAIKETVRTNFPRTWIWNLVSVDSSGTANVSFLVPDTITQWEASAFCVNGNAGFGISPKVSLQISQPFFVEVTSPFSVVRSEQSDMVVTVFNYLTTCVEISVQLEASENYEASINTQRNTDSEVLQAGEQKTYVWTIIPKTLGKVNVTVVATSKQSRACPNDASKEQDVHWKDTVVKTMLVEAEGIEKEATQSFLICPKGTKASKQTLLELPSNVVEGSVRSFVTIVGDILGVAMQNLESLLQMPYGCGEQNIAQLASDVYILDYLKATDQLTEELKSKAQRLLSNGYQNHLSFKNYDGSYDVFCQSNQEGSTWLSALSFKTVEKMKEYIFIEETVPKQTLIWLVKKQKSNGCFRRDEKHVDTAQEGREGDQEDIALTAYVVGVFLEVGLNASFPALRNGLYCLEEAFSNGVTNGYTQAILAYVFALAGKEQQAKSLLSILDKSATKTNNMIYWERDEKPETDNSPSFIPSALSGETEKTCYVLLAVLSQDTQDLDYASKIVQWLAQRMNSHGGFSAMQDTTVCLLALTQYMKLTGSNPQNTITLSSEESEEVFYVNRNKRLLVQHSKVSKGHQQYTVDVEGDGCSFIQATLRYNVPLPKEASGFSLSVKTGKSNSSDEFQTKFELTVTLTYTGARESSVTVLVDVKMLSGFTPVVSSTEELKFNSQVTKTDIKNGHVLFYLENVPKEATSLTFSIEQTNHVANIQPAPVTVYSYEKGEYAFDSYNINSISDSQ.

Residues Met1 to Ala19 form the signal peptide. 3 N-linked (GlcNAc...) asparagine glycosylation sites follow: Asn48, Asn172, and Asn868.

This sequence belongs to the protease inhibitor I39 (alpha-2-macroglobulin) family. Homotetramer; consists of two dimer pairs that are disulfide-linked. Part of a complex composed of complement component C3, CLCA1/CLCA3, A2ML1/OH and ALB/serum albumin.

The protein resides in the secreted. Inhibits protease gelatinolytic complex activity against type 1 collagen. The sequence is that of Alpha-2-macroglobulin-like protein 1 from Mus musculus (Mouse).